Reading from the N-terminus, the 384-residue chain is Glucans biosynthesis protein C (384 aa).

10 helical membrane passes run 17–37 (AWLMLLGIPFHISLIYSTHSW), 54–74 (FIHAFRMQVFFVISGYFSYML), 91–111 (VGIPMLTAIPLLTLPQFILLQ), 140–160 (LWFLLVLVILTTVSIGIFTWF), 173–193 (AISLAKLSLIFFLLGIAYAAI), 212–232 (FIVMQTLFYVPFFILGALAFI), 240–260 (FTTPSRGCTLGAAVAFIAYLL), 274–294 (TESVITMVMGLWMVNVVFSLG), 311–331 (ASLFIYLVHHPLTLFFGAYIT), and 338–358 (LIGFLCGLIFVMGIALILYEI).

It belongs to the acyltransferase 3 family. OpgC subfamily.

The protein localises to the cell membrane. It functions in the pathway glycan metabolism; osmoregulated periplasmic glucan (OPG) biosynthesis. Its function is as follows. Necessary for the succinyl substitution of periplasmic glucans. Could catalyze the transfer of succinyl residues from the cytoplasmic side of the membrane to the nascent glucan backbones on the periplasmic side of the membrane. This Salmonella schwarzengrund (strain CVM19633) protein is Glucans biosynthesis protein C.